Here is a 173-residue protein sequence, read N- to C-terminus: Shikimate kinase 1 (173 aa).

14-19 is a binding site for ATP; the sequence is GAGKST. A Mg(2+)-binding site is contributed by Ser-18. The substrate site is built by Asp-36, Arg-60, and Gly-82. Arg-120 is a binding site for ATP. Position 140 (Arg-140) interacts with substrate. Gln-157 serves as a coordination point for ATP.

This sequence belongs to the shikimate kinase family. In terms of assembly, monomer. Requires Mg(2+) as cofactor.

The protein localises to the cytoplasm. The enzyme catalyses shikimate + ATP = 3-phosphoshikimate + ADP + H(+). The protein operates within metabolic intermediate biosynthesis; chorismate biosynthesis; chorismate from D-erythrose 4-phosphate and phosphoenolpyruvate: step 5/7. Its function is as follows. Catalyzes the specific phosphorylation of the 3-hydroxyl group of shikimic acid using ATP as a cosubstrate. This is Shikimate kinase 1 from Pectobacterium atrosepticum (strain SCRI 1043 / ATCC BAA-672) (Erwinia carotovora subsp. atroseptica).